The following is a 110-amino-acid chain: UPF0060 membrane protein Haur_1798 (110 aa).

The next 4 membrane-spanning stretches (helical) occupy residues 7–27 (VVLF…VWQW), 33–53 (SIWF…LPTL), 63–83 (VYAA…WLID), and 89–109 (QPSL…LYWP).

The protein belongs to the UPF0060 family.

Its subcellular location is the cell membrane. The sequence is that of UPF0060 membrane protein Haur_1798 from Herpetosiphon aurantiacus (strain ATCC 23779 / DSM 785 / 114-95).